The sequence spans 508 residues: Lysine--tRNA ligase (508 aa).

Glu418 and Glu425 together coordinate Mg(2+).

It belongs to the class-II aminoacyl-tRNA synthetase family. Homodimer. The cofactor is Mg(2+).

It localises to the cytoplasm. The catalysed reaction is tRNA(Lys) + L-lysine + ATP = L-lysyl-tRNA(Lys) + AMP + diphosphate. The protein is Lysine--tRNA ligase of Burkholderia cenocepacia (strain HI2424).